The following is a 235-amino-acid chain: Uridylate kinase (235 aa).

An ATP-binding site is contributed by 9–12; the sequence is KLSG. An involved in allosteric activation by GTP region spans residues 17–22; it reads GDQGYG. Gly51 contacts UMP. Gly52 and Arg56 together coordinate ATP. UMP-binding positions include Asp71 and 132–139; that span reads CGNPFFTT. Residues Thr159, Tyr165, and Asp168 each contribute to the ATP site.

Belongs to the UMP kinase family. Homohexamer.

The protein resides in the cytoplasm. It carries out the reaction UMP + ATP = UDP + ADP. Its pathway is pyrimidine metabolism; CTP biosynthesis via de novo pathway; UDP from UMP (UMPK route): step 1/1. Allosterically activated by GTP. Inhibited by UTP. Functionally, catalyzes the reversible phosphorylation of UMP to UDP. The protein is Uridylate kinase of Synechococcus sp. (strain WH7803).